The chain runs to 425 residues: Gamma-glutamyl phosphate reductase (425 aa).

Belongs to the gamma-glutamyl phosphate reductase family.

The protein resides in the cytoplasm. The enzyme catalyses L-glutamate 5-semialdehyde + phosphate + NADP(+) = L-glutamyl 5-phosphate + NADPH + H(+). Its pathway is amino-acid biosynthesis; L-proline biosynthesis; L-glutamate 5-semialdehyde from L-glutamate: step 2/2. Catalyzes the NADPH-dependent reduction of L-glutamate 5-phosphate into L-glutamate 5-semialdehyde and phosphate. The product spontaneously undergoes cyclization to form 1-pyrroline-5-carboxylate. This chain is Gamma-glutamyl phosphate reductase, found in Symbiobacterium thermophilum (strain DSM 24528 / JCM 14929 / IAM 14863 / T).